The following is a 239-amino-acid chain: Ubiquinone biosynthesis O-methyltransferase (239 aa).

Residues Arg-44, Gly-63, Asp-84, and Met-128 each coordinate S-adenosyl-L-methionine.

The protein belongs to the methyltransferase superfamily. UbiG/COQ3 family.

It carries out the reaction a 3-demethylubiquinol + S-adenosyl-L-methionine = a ubiquinol + S-adenosyl-L-homocysteine + H(+). The enzyme catalyses a 3-(all-trans-polyprenyl)benzene-1,2-diol + S-adenosyl-L-methionine = a 2-methoxy-6-(all-trans-polyprenyl)phenol + S-adenosyl-L-homocysteine + H(+). Its pathway is cofactor biosynthesis; ubiquinone biosynthesis. In terms of biological role, O-methyltransferase that catalyzes the 2 O-methylation steps in the ubiquinone biosynthetic pathway. This chain is Ubiquinone biosynthesis O-methyltransferase, found in Xanthomonas campestris pv. campestris (strain 8004).